The chain runs to 160 residues: SsrA-binding protein (160 aa).

It belongs to the SmpB family.

It localises to the cytoplasm. Its function is as follows. Required for rescue of stalled ribosomes mediated by trans-translation. Binds to transfer-messenger RNA (tmRNA), required for stable association of tmRNA with ribosomes. tmRNA and SmpB together mimic tRNA shape, replacing the anticodon stem-loop with SmpB. tmRNA is encoded by the ssrA gene; the 2 termini fold to resemble tRNA(Ala) and it encodes a 'tag peptide', a short internal open reading frame. During trans-translation Ala-aminoacylated tmRNA acts like a tRNA, entering the A-site of stalled ribosomes, displacing the stalled mRNA. The ribosome then switches to translate the ORF on the tmRNA; the nascent peptide is terminated with the 'tag peptide' encoded by the tmRNA and targeted for degradation. The ribosome is freed to recommence translation, which seems to be the essential function of trans-translation. This is SsrA-binding protein from Histophilus somni (strain 129Pt) (Haemophilus somnus).